The chain runs to 568 residues: CDK5 and ABL1 enzyme substrate 1 (568 aa).

Low complexity predominate over residues 1–31 (MAAATATAGTAACSSSSSSRGGSTDAAATSG). Disordered stretches follow at residues 1-94 (MAAA…PGAR) and 130-169 (PSLV…QEEL). The interval 1 to 98 (MAAATATAGT…TKPGARARLS (98 aa)) is interaction with TDRD7. The segment covering 33–45 (QPPPPPPATAPPE) has biased composition (pro residues). Basic and acidic residues predominate over residues 46-56 (PLRKPRMDPRR). Residues 140–427 (PSQPPRSAPA…TTVIDYVKPS (288 aa)) are interaction with CDK3. Phosphoserine is present on S248. The residue at position 274 (S274) is a Phosphoserine; by CDK2 and CDK3. A Phosphothreonine modification is found at T350.

Belongs to the cyclin family. Found in a complex with p53/TP53. Found in a number of complexes with CDK2, CDK3, CDK5, ABL1, TDRD7, CDK17, CCNA1, CCNE1 and TP73. Interacts with CDK2, CDK3, CDK5, ABL1 and TDRD7. Post-translationally, phosphorylated on Ser-274 by CCNE1/CDK3. Phosphorylated on serine/threonine residues by CDK5 and on tyrosine residues by ABL1. Also phosphorylated in vitro by CCNA1/CDK2, CCNE1/CDK2, CCNA1/CDK3 and CCNE1/CDK3. Ubiquitous. Expressed in postnatal day 1 (P1), in postmitotic neurons of the subplate, cortex (V/VI) and marginal zone; in postnatal day 7 (P7), in all layers of the cerebral cortex and in the CA1 and CA2 regions of the hippocampus (at protein level). Highly expressed in brain, kidney, liver and lung.

It is found in the nucleus. The protein localises to the cytoplasm. Its subcellular location is the cell projection. The protein resides in the growth cone. Functionally, cyclin-dependent kinase binding protein. Enhances cyclin-dependent kinase tyrosine phosphorylation by nonreceptor tyrosine kinases, such as that of CDK5 by activated ABL1, which leads to increased CDK5 activity and is critical for neuronal development, and that of CDK2 by WEE1, which leads to decreased CDK2 activity and growth inhibition. Positively affects neuronal outgrowth. Plays a role as a regulator for p53/p73-induced cell death. This is CDK5 and ABL1 enzyme substrate 1 (Cables1) from Mus musculus (Mouse).